A 108-amino-acid polypeptide reads, in one-letter code: ATP-dependent Clp protease adapter protein ClpS (108 aa).

It belongs to the ClpS family. As to quaternary structure, binds to the N-terminal domain of the chaperone ClpA.

Involved in the modulation of the specificity of the ClpAP-mediated ATP-dependent protein degradation. The sequence is that of ATP-dependent Clp protease adapter protein ClpS from Leptospira borgpetersenii serovar Hardjo-bovis (strain JB197).